The following is a 64-amino-acid chain: MKASELLQKDQAALNKELSDLLKAQFGLRMQLATQQLTNTSQLKKVRRDIARVRTVLTQKANQK.

Belongs to the universal ribosomal protein uL29 family.

The polypeptide is Large ribosomal subunit protein uL29 (Burkholderia mallei (strain NCTC 10247)).